Here is a 177-residue protein sequence, read N- to C-terminus: Isopentenyl-diphosphate Delta-isomerase 1 (177 aa).

Positions 24 and 30 each coordinate Mn(2+). The Nudix hydrolase domain occupies 28–160; that stretch reads SLHRAISIFI…PHAYSFWLEA (133 aa). Residue Cys-65 is part of the active site. Residue Cys-65 participates in Mg(2+) binding. Residue His-67 participates in Mn(2+) binding. Residue Glu-85 participates in Mg(2+) binding. Positions 110 and 112 each coordinate Mn(2+). Residue Glu-112 is part of the active site.

The protein belongs to the IPP isomerase type 1 family. It depends on Mg(2+) as a cofactor. Mn(2+) is required as a cofactor.

Its subcellular location is the cytoplasm. The enzyme catalyses isopentenyl diphosphate = dimethylallyl diphosphate. Its pathway is isoprenoid biosynthesis; dimethylallyl diphosphate biosynthesis; dimethylallyl diphosphate from isopentenyl diphosphate: step 1/1. In terms of biological role, catalyzes the 1,3-allylic rearrangement of the homoallylic substrate isopentenyl (IPP) to its highly electrophilic allylic isomer, dimethylallyl diphosphate (DMAPP). This Aromatoleum aromaticum (strain DSM 19018 / LMG 30748 / EbN1) (Azoarcus sp. (strain EbN1)) protein is Isopentenyl-diphosphate Delta-isomerase 1.